The following is a 397-amino-acid chain: Serpin B10 (397 aa).

The Nuclear localization signal signature appears at 74 to 77 (KKRK).

Belongs to the serpin family. Ov-serpin subfamily.

It is found in the nucleus. The protein localises to the cytoplasm. Protease inhibitor that may play a role in the regulation of protease activities during hematopoiesis and apoptosis induced by TNF. May regulate protease activities in the cytoplasm and in the nucleus. The polypeptide is Serpin B10 (SERPINB10) (Rhinolophus ferrumequinum (Greater horseshoe bat)).